A 2032-amino-acid polypeptide reads, in one-letter code: Cytoskeleton-associated protein 5 (2032 aa).

TOG regions lie at residues M1 to T223, Y268 to G502, and S588 to P817. At K48 the chain carries N6-acetyllysine. 3 HEAT repeats span residues I159–D197, G356–L394, and K434–E472. The tract at residues H501–T579 is disordered. The HEAT 4 repeat unit spans residues E750–P788. The tract at residues K811 to V848 is disordered. S816 carries the post-translational modification Phosphoserine. Over residues D833–G842 the composition is skewed to acidic residues. TOG stretches follow at residues P853–P1081 and I1193–S1428. 3 HEAT repeats span residues I855–F893, R936–M974, and P1013–Y1051. The span at A1078–M1095 shows a compositional bias: low complexity. A disordered region spans residues A1078–K1156. HEAT repeat units follow at residues E1284–A1322, K1324–M1357, and Q1361–D1399. Positions I1420–D1459 are disordered. The span at R1441 to N1450 shows a compositional bias: polar residues. At S1469 the chain carries Phosphoserine. The tract at residues S1801–E1822 is disordered. Over residues K1808–E1822 the composition is skewed to basic and acidic residues. S1861 carries the post-translational modification Phosphoserine. Disordered regions lie at residues S1893 to N1926 and L1948 to K2032. Positions V1909–S1921 are enriched in low complexity. The interaction with TACC3 stretch occupies residues P1932–P1957. Positions A1972–S1983 are enriched in polar residues. Basic and acidic residues predominate over residues Q1984–L1997. A compositionally biased stretch (low complexity) spans T2002–T2015. Residues D2018–K2032 are compositionally biased toward basic and acidic residues.

This sequence belongs to the TOG/XMAP215 family. In terms of assembly, interacts with TACC1. Interacts with HNRNPA2B1. Interacts with TACC3 independently of clathrin. Interacts with TACC3 and clathrin forming the TACC3/ch-TOG/clathrin complex located at spindle inter-microtubules bridges. Interacts with NDC80; indicative for an association with the NDC80 complex. Interacts with SLAIN2. Interacts with SLAIN1.

It localises to the cytoplasm. It is found in the cytoskeleton. Its subcellular location is the microtubule organizing center. The protein resides in the centrosome. The protein localises to the spindle pole. It localises to the spindle. It is found in the chromosome. Its subcellular location is the centromere. The protein resides in the kinetochore. In terms of biological role, binds to the plus end of microtubules and regulates microtubule dynamics and microtubule organization. Acts as a processive microtubule polymerase. Promotes cytoplasmic microtubule nucleation and elongation. Plays a major role in organizing spindle poles. In spindle formation protects kinetochore microtubules from depolymerization by KIF2C and has an essential role in centrosomal microtubule assembly independently of KIF2C activity. Contributes to centrosome integrity. Acts as a component of the TACC3/ch-TOG/clathrin complex proposed to contribute to stabilization of kinetochore fibers of the mitotic spindle by acting as inter-microtubule bridge. The TACC3/ch-TOG/clathrin complex is required for the maintenance of kinetochore fiber tension. Enhances the strength of NDC80 complex-mediated kinetochore-tip microtubule attachments. This is Cytoskeleton-associated protein 5 from Mus musculus (Mouse).